Here is a 144-residue protein sequence, read N- to C-terminus: Large ribosomal subunit protein uL15 (144 aa).

Residues M1–V44 are disordered. A compositionally biased stretch (gly residues) spans T23 to Q35.

It belongs to the universal ribosomal protein uL15 family. Part of the 50S ribosomal subunit.

In terms of biological role, binds to the 23S rRNA. The protein is Large ribosomal subunit protein uL15 of Leuconostoc citreum (strain KM20).